A 497-amino-acid chain; its full sequence is Phenylalanine--tRNA ligase alpha subunit (497 aa).

Residues Thr-329, 372–374 (QIE), and Tyr-412 each bind L-phenylalanine. Glu-414 provides a ligand contact to Mg(2+). Phe-438 contributes to the L-phenylalanine binding site.

The protein belongs to the class-II aminoacyl-tRNA synthetase family. Phe-tRNA synthetase alpha subunit type 2 subfamily. In terms of assembly, heterotetramer; dimer of two heterodimers formed by alpha and beta subunits. It depends on Mg(2+) as a cofactor.

The protein resides in the cytoplasm. The catalysed reaction is tRNA(Phe) + L-phenylalanine + ATP = L-phenylalanyl-tRNA(Phe) + AMP + diphosphate + H(+). The polypeptide is Phenylalanine--tRNA ligase alpha subunit (farsa) (Danio rerio (Zebrafish)).